We begin with the raw amino-acid sequence, 97 residues long: Citrate lyase acyl carrier protein (97 aa).

An O-(phosphoribosyl dephospho-coenzyme A)serine modification is found at Ser14.

This sequence belongs to the CitD family. Oligomer with a subunit composition of (alpha,beta,gamma)6.

The protein resides in the cytoplasm. Functionally, covalent carrier of the coenzyme of citrate lyase. This Escherichia fergusonii (strain ATCC 35469 / DSM 13698 / CCUG 18766 / IAM 14443 / JCM 21226 / LMG 7866 / NBRC 102419 / NCTC 12128 / CDC 0568-73) protein is Citrate lyase acyl carrier protein.